The primary structure comprises 920 residues: Nonribosomal peptide synthetase atrA (920 aa).

The tract at residues 13 to 428 (AAAQERCGRV…AGRLKETMII (416 aa)) is adenylation (A) domain. The Carrier domain maps to 558-637 (PPKDELERSL…ELSAALHDLQ (80 aa)). Position 595 is an O-(pantetheine 4'-phosphoryl)serine (serine 595). Residues 656–905 (PLWLIHPGVG…YTMLAPEHVF (250 aa)) are thioesterase (TE) domain.

It belongs to the NRP synthetase family.

It carries out the reaction 2 3-(4-hydroxyphenyl)pyruvate + 2 ATP = atromentin + 2 AMP + 2 diphosphate + H(+). In terms of biological role, nonribosomal peptide synthetase that mediates the biosynthesis of atromentin. AtrA first activates 4-hydroxyphenylpyruvate (HPPA) through its A domain to AMP-HPPA. The HPPA unit is then loaded to the T domain and eventually transferred to the TE domain. Another HPPA unit is then loaded onto the T domain. The TE domain then catalyzes the condensation of the two HPPA units and the release of atromentin via cyclization. This is Nonribosomal peptide synthetase atrA from Aspergillus terreus (strain NIH 2624 / FGSC A1156).